The primary structure comprises 328 residues: Naphthalene 1,2-dioxygenase system ferredoxin--NAD(P)(+), reductase component (328 aa).

The region spanning 1–89 is the 2Fe-2S ferredoxin-type domain; it reads MELLIQPNNR…NCAIEVPEAD (89 aa). Residues cysteine 35, cysteine 40, cysteine 43, and cysteine 73 each coordinate [2Fe-2S] cluster. The region spanning 96-193 is the FAD-binding FR-type domain; sequence ARIIKGTVVA…SGPLGTAYLR (98 aa).

It belongs to the bacterial ring-hydroxylating dioxygenase ferredoxin reductase component family. The naphthalene dioxygenase (NDO) multicomponent enzyme system is composed of an electron transfer component and a dioxygenase component (iron sulfur protein (ISP)). The electron transfer component is composed of a ferredoxin reductase (NdoR) and a ferredoxin (NdoA), and the dioxygenase component is formed of a heterohexamer (trimer of heterodimers) of three large alpha subunits (NdoB) and three small beta subunits (NdoC). [2Fe-2S] cluster is required as a cofactor. FAD serves as cofactor.

The enzyme catalyses 2 reduced [2Fe-2S]-[ferredoxin] + NAD(+) + H(+) = 2 oxidized [2Fe-2S]-[ferredoxin] + NADH. It catalyses the reaction 2 reduced [2Fe-2S]-[ferredoxin] + NADP(+) + H(+) = 2 oxidized [2Fe-2S]-[ferredoxin] + NADPH. Its pathway is aromatic compound metabolism; naphthalene degradation. Its activity is regulated as follows. Strongly inhibited by p-chloromercuribenzoate. Also inhibited by N-ethylmaleimide and o-phenanthroline. Its function is as follows. Component of the naphthalene dioxygenase (NDO) multicomponent enzyme system which catalyzes the incorporation of both atoms of molecular oxygen into naphthalene to form cis-(1R,2S)-dihydroxy-1,2-dihydronaphthalene. Ferredoxin reductase catalyzes the transfer of electrons from NADH to ferredoxin (NdoA). NADPH is also effective but yields only 39% of the activity obtained with NADH. Also able to catalyze the cis-dihydroxylation of biphenyl and phenanthrene. The chain is Naphthalene 1,2-dioxygenase system ferredoxin--NAD(P)(+), reductase component (ndoR) from Pseudomonas putida (Arthrobacter siderocapsulatus).